The chain runs to 185 residues: ATP synthase subunit delta (185 aa).

The protein belongs to the ATPase delta chain family. As to quaternary structure, F-type ATPases have 2 components, F(1) - the catalytic core - and F(0) - the membrane proton channel. F(1) has five subunits: alpha(3), beta(3), gamma(1), delta(1), epsilon(1). F(0) has three main subunits: a(1), b(2) and c(10-14). The alpha and beta chains form an alternating ring which encloses part of the gamma chain. F(1) is attached to F(0) by a central stalk formed by the gamma and epsilon chains, while a peripheral stalk is formed by the delta and b chains.

The protein localises to the cell inner membrane. Its function is as follows. F(1)F(0) ATP synthase produces ATP from ADP in the presence of a proton or sodium gradient. F-type ATPases consist of two structural domains, F(1) containing the extramembraneous catalytic core and F(0) containing the membrane proton channel, linked together by a central stalk and a peripheral stalk. During catalysis, ATP synthesis in the catalytic domain of F(1) is coupled via a rotary mechanism of the central stalk subunits to proton translocation. Functionally, this protein is part of the stalk that links CF(0) to CF(1). It either transmits conformational changes from CF(0) to CF(1) or is implicated in proton conduction. The sequence is that of ATP synthase subunit delta from Coxiella burnetii (strain CbuG_Q212) (Coxiella burnetii (strain Q212)).